The primary structure comprises 274 residues: NADPH-dependent 7-cyano-7-deazaguanine reductase (274 aa).

Residue 80–82 (VES) coordinates substrate. NADPH is bound at residue 82-83 (SK). Cys181 acts as the Thioimide intermediate in catalysis. The active-site Proton donor is Asp188. 220-221 (HE) is a substrate binding site. 249 to 250 (RG) is an NADPH binding site.

This sequence belongs to the GTP cyclohydrolase I family. QueF type 2 subfamily. As to quaternary structure, homodimer.

Its subcellular location is the cytoplasm. The catalysed reaction is 7-aminomethyl-7-carbaguanine + 2 NADP(+) = 7-cyano-7-deazaguanine + 2 NADPH + 3 H(+). It participates in tRNA modification; tRNA-queuosine biosynthesis. Catalyzes the NADPH-dependent reduction of 7-cyano-7-deazaguanine (preQ0) to 7-aminomethyl-7-deazaguanine (preQ1). The protein is NADPH-dependent 7-cyano-7-deazaguanine reductase of Burkholderia ambifaria (strain ATCC BAA-244 / DSM 16087 / CCUG 44356 / LMG 19182 / AMMD) (Burkholderia cepacia (strain AMMD)).